A 448-amino-acid chain; its full sequence is UPF0053 protein sll0260 (448 aa).

Positions 2 to 203 (FSSSVELELF…AQAGMIDEAE (202 aa)) constitute a CNNM transmembrane domain. 4 helical membrane-spanning segments follow: residues 11–31 (FFIF…IAIV), 62–82 (FLSA…AVGG), 106–126 (LSIS…GELV), and 142–162 (VAPA…LLGV). CBS domains are found at residues 222-281 (MTPR…GQKI) and 286-345 (IVQP…NDDE).

The protein belongs to the UPF0053 family.

The protein resides in the cell membrane. In Synechocystis sp. (strain ATCC 27184 / PCC 6803 / Kazusa), this protein is UPF0053 protein sll0260.